A 114-amino-acid polypeptide reads, in one-letter code: rRNA-processing protein cgrA (114 aa).

A disordered region spans residues 1-96; it reads MSASESAPSA…YDKMAEKMHR (96 aa). The stretch at 40-101 forms a coiled coil; sequence AKRLEARKHQ…EKMHRKRVER (62 aa). Basic and acidic residues predominate over residues 41-93; that stretch reads KRLEARKHQEAVKEHERELKEEKEAERQAHIQRIKDRRAAKEEKERYDKMAEK.

Belongs to the CGR1 family.

It localises to the nucleus. Its subcellular location is the nucleolus. Functionally, involved in nucleolar integrity and required for processing of the pre-rRNA for the 60S ribosome subunit. The chain is rRNA-processing protein cgrA (cgrA) from Aspergillus terreus (strain NIH 2624 / FGSC A1156).